A 294-amino-acid chain; its full sequence is Probable 2-(5''-triphosphoribosyl)-3'-dephosphocoenzyme-A synthase (294 aa).

Belongs to the CitG/MdcB family.

The catalysed reaction is 3'-dephospho-CoA + ATP = 2'-(5''-triphospho-alpha-D-ribosyl)-3'-dephospho-CoA + adenine. The protein is Probable 2-(5''-triphosphoribosyl)-3'-dephosphocoenzyme-A synthase of Streptococcus equi subsp. equi (strain 4047).